We begin with the raw amino-acid sequence, 485 residues long: Glutamate--tRNA ligase (485 aa).

The 'HIGH' region signature appears at 12–22 (PSPTGYMHIGN). The 'KMSKS' region signature appears at 253–257 (KLSKR). Position 256 (Lys256) interacts with ATP.

Belongs to the class-I aminoacyl-tRNA synthetase family. Glutamate--tRNA ligase type 1 subfamily. As to quaternary structure, monomer.

The protein resides in the cytoplasm. The enzyme catalyses tRNA(Glu) + L-glutamate + ATP = L-glutamyl-tRNA(Glu) + AMP + diphosphate. Catalyzes the attachment of glutamate to tRNA(Glu) in a two-step reaction: glutamate is first activated by ATP to form Glu-AMP and then transferred to the acceptor end of tRNA(Glu). This chain is Glutamate--tRNA ligase, found in Clostridium acetobutylicum (strain ATCC 824 / DSM 792 / JCM 1419 / IAM 19013 / LMG 5710 / NBRC 13948 / NRRL B-527 / VKM B-1787 / 2291 / W).